The following is a 207-amino-acid chain: Ribosomal RNA small subunit methyltransferase G (207 aa).

S-adenosyl-L-methionine is bound by residues G73, L78, 124–125, and R139; that span reads VE.

It belongs to the methyltransferase superfamily. RNA methyltransferase RsmG family.

The protein resides in the cytoplasm. It catalyses the reaction guanosine(527) in 16S rRNA + S-adenosyl-L-methionine = N(7)-methylguanosine(527) in 16S rRNA + S-adenosyl-L-homocysteine. Its function is as follows. Specifically methylates the N7 position of guanine in position 527 of 16S rRNA. The chain is Ribosomal RNA small subunit methyltransferase G from Salmonella agona (strain SL483).